A 448-amino-acid chain; its full sequence is Homogentisate 1,2-dioxygenase (448 aa).

The Proton acceptor role is filled by His303. The Fe cation site is built by His346 and Glu352. The homogentisate site is built by Tyr361 and His382. His382 is a Fe cation binding site.

This sequence belongs to the homogentisate dioxygenase family. Hexamer; dimer of trimers. It depends on Fe cation as a cofactor.

It catalyses the reaction homogentisate + O2 = 4-maleylacetoacetate + H(+). It functions in the pathway amino-acid degradation; L-phenylalanine degradation; acetoacetate and fumarate from L-phenylalanine: step 4/6. Involved in the catabolism of homogentisate (2,5-dihydroxyphenylacetate or 2,5-OH-PhAc), a central intermediate in the degradation of phenylalanine and tyrosine. Catalyzes the oxidative ring cleavage of the aromatic ring of homogentisate to yield maleylacetoacetate. The protein is Homogentisate 1,2-dioxygenase of Bradyrhizobium diazoefficiens (strain JCM 10833 / BCRC 13528 / IAM 13628 / NBRC 14792 / USDA 110).